A 593-amino-acid polypeptide reads, in one-letter code: ABC transporter F family member 2 (593 aa).

Basic residues predominate over residues 1–10; the sequence is MAKKGGKNNK. The interval 1–25 is disordered; sequence MAKKGGKNNKSKKEVTPPTSDVEDE. ABC transporter domains follow at residues 53 to 294 and 364 to 583; these read VKIE…VNQM and MHFD…RDLT. Residues 85–92 and 399–406 contribute to the ATP site; these read GQNGCGKS and GPNGAGKS.

The protein belongs to the ABC transporter superfamily. ABCF family. EF3 subfamily.

The polypeptide is ABC transporter F family member 2 (abcF2) (Dictyostelium discoideum (Social amoeba)).